The following is a 661-amino-acid chain: UvrABC system protein B (661 aa).

Residues A25–P414 enclose the Helicase ATP-binding domain. G38–T45 lines the ATP pocket. A Beta-hairpin motif is present at residues Y91 to I114. The Helicase C-terminal domain maps to Q430–I592. Positions K621–A656 constitute a UVR domain.

Belongs to the UvrB family. In terms of assembly, forms a heterotetramer with UvrA during the search for lesions. Interacts with UvrC in an incision complex.

It is found in the cytoplasm. The UvrABC repair system catalyzes the recognition and processing of DNA lesions. A damage recognition complex composed of 2 UvrA and 2 UvrB subunits scans DNA for abnormalities. Upon binding of the UvrA(2)B(2) complex to a putative damaged site, the DNA wraps around one UvrB monomer. DNA wrap is dependent on ATP binding by UvrB and probably causes local melting of the DNA helix, facilitating insertion of UvrB beta-hairpin between the DNA strands. Then UvrB probes one DNA strand for the presence of a lesion. If a lesion is found the UvrA subunits dissociate and the UvrB-DNA preincision complex is formed. This complex is subsequently bound by UvrC and the second UvrB is released. If no lesion is found, the DNA wraps around the other UvrB subunit that will check the other stand for damage. In Rickettsia felis (strain ATCC VR-1525 / URRWXCal2) (Rickettsia azadi), this protein is UvrABC system protein B.